The sequence spans 273 residues: Putative phosphoenolpyruvate synthase regulatory protein (273 aa).

Position 153–160 (153–160) interacts with ADP; it reads AVSRAGKT.

The protein belongs to the pyruvate, phosphate/water dikinase regulatory protein family. PSRP subfamily.

The catalysed reaction is [pyruvate, water dikinase] + ADP = [pyruvate, water dikinase]-phosphate + AMP + H(+). It carries out the reaction [pyruvate, water dikinase]-phosphate + phosphate + H(+) = [pyruvate, water dikinase] + diphosphate. Functionally, bifunctional serine/threonine kinase and phosphorylase involved in the regulation of the phosphoenolpyruvate synthase (PEPS) by catalyzing its phosphorylation/dephosphorylation. In Xanthomonas campestris pv. campestris (strain 8004), this protein is Putative phosphoenolpyruvate synthase regulatory protein.